Reading from the N-terminus, the 282-residue chain is 5'-adenylylsulfate reductase-like 2 (282 aa).

The signal sequence occupies residues 1-19 (MRWWPALPLLLLAVAVAGA). A Thioredoxin domain is found at 20–159 (GDAAPVCTRP…LAAFYNDVSG (140 aa)). Residue Asn134 is glycosylated (N-linked (GlcNAc...) asparagine). Residues 205–225 (AASFVILRLLYLFYPKITAFV) traverse the membrane as a helical segment.

The protein localises to the membrane. The protein is 5'-adenylylsulfate reductase-like 2 (APRL2) of Oryza sativa subsp. japonica (Rice).